The following is a 287-amino-acid chain: Ribosomal RNA-processing protein 8 (287 aa).

Residues 1-62 (MTTEENKTSR…SAPSKRPKPS (62 aa)) form a disordered region. Positions 9–21 (SRNRKRKRQRNPK) are enriched in basic residues. Positions 35–46 (QNEKKNQRDTKN) are enriched in basic and acidic residues. Residues histidine 107, glycine 142, aspartate 160, aspartate 172, methionine 173, and cysteine 189 each coordinate S-adenosyl-L-methionine.

It belongs to the methyltransferase superfamily. RRP8 family.

The protein localises to the nucleus. It is found in the nucleolus. In terms of biological role, probable methyltransferase required to silence rDNA. The sequence is that of Ribosomal RNA-processing protein 8 from Arabidopsis thaliana (Mouse-ear cress).